A 326-amino-acid chain; its full sequence is Eukaryotic translation initiation factor 3 subunit I (326 aa).

WD repeat units lie at residues 8–47, 50–89, 145–184, 188–227, and 285–326; these read GHER…RLGT, GHQG…VIAS, MTES…KVVD, DHSA…CLKT, and GHFG…NIFE.

Belongs to the eIF-3 subunit I family. As to quaternary structure, component of the eukaryotic translation initiation factor 3 (eIF-3) complex. The eIF-3 complex interacts with pix.

It localises to the cytoplasm. Component of the eukaryotic translation initiation factor 3 (eIF-3) complex, which is involved in protein synthesis of a specialized repertoire of mRNAs and, together with other initiation factors, stimulates binding of mRNA and methionyl-tRNAi to the 40S ribosome. The eIF-3 complex specifically targets and initiates translation of a subset of mRNAs involved in cell proliferation. The polypeptide is Eukaryotic translation initiation factor 3 subunit I (Drosophila sechellia (Fruit fly)).